The chain runs to 213 residues: Pyrrolidone-carboxylate peptidase (213 aa).

Active-site residues include Glu-78, Cys-141, and His-165.

This sequence belongs to the peptidase C15 family. In terms of assembly, homotetramer.

It localises to the cytoplasm. It carries out the reaction Release of an N-terminal pyroglutamyl group from a polypeptide, the second amino acid generally not being Pro.. Its function is as follows. Removes 5-oxoproline from various penultimate amino acid residues except L-proline. This is Pyrrolidone-carboxylate peptidase from Alkaliphilus oremlandii (strain OhILAs) (Clostridium oremlandii (strain OhILAs)).